A 545-amino-acid polypeptide reads, in one-letter code: CTP synthase (545 aa).

Residues 1-266 (MTTNYIFVTG…DDYICKRFSL (266 aa)) form an amidoligase domain region. Ser14 is a CTP binding site. Ser14 provides a ligand contact to UTP. Residues 15 to 20 (SLGKGI) and Asp72 contribute to the ATP site. The Mg(2+) site is built by Asp72 and Glu140. CTP-binding positions include 147–149 (DIE), 187–192 (KTKPTQ), and Lys223. UTP-binding positions include 187 to 192 (KTKPTQ) and Lys223. 239–241 (KDI) lines the ATP pocket. The Glutamine amidotransferase type-1 domain maps to 291 to 542 (TIGMVGKYVA…VKAAGAYQKR (252 aa)). Gly352 contributes to the L-glutamine binding site. Cys379 functions as the Nucleophile; for glutamine hydrolysis in the catalytic mechanism. Residues 380-383 (LGMQ), Glu403, and Arg470 each bind L-glutamine. Active-site residues include His515 and Glu517.

It belongs to the CTP synthase family. In terms of assembly, homotetramer.

It catalyses the reaction UTP + L-glutamine + ATP + H2O = CTP + L-glutamate + ADP + phosphate + 2 H(+). The catalysed reaction is L-glutamine + H2O = L-glutamate + NH4(+). The enzyme catalyses UTP + NH4(+) + ATP = CTP + ADP + phosphate + 2 H(+). The protein operates within pyrimidine metabolism; CTP biosynthesis via de novo pathway; CTP from UDP: step 2/2. Allosterically activated by GTP, when glutamine is the substrate; GTP has no effect on the reaction when ammonia is the substrate. The allosteric effector GTP functions by stabilizing the protein conformation that binds the tetrahedral intermediate(s) formed during glutamine hydrolysis. Inhibited by the product CTP, via allosteric rather than competitive inhibition. In terms of biological role, catalyzes the ATP-dependent amination of UTP to CTP with either L-glutamine or ammonia as the source of nitrogen. Regulates intracellular CTP levels through interactions with the four ribonucleotide triphosphates. The sequence is that of CTP synthase from Pectobacterium atrosepticum (strain SCRI 1043 / ATCC BAA-672) (Erwinia carotovora subsp. atroseptica).